The following is a 354-amino-acid chain: MINTFNPEVRLAIHDLDKVGPAIPLENYEAALRAILTGKASPVETASFLASLHLTKAEEVPDILMQTVQILKSYSTPIANIEMVSPRFVDIVGTGGDGHNTFNVSTASAIVAAGAGLWVCKHGNKASTSASGSADLLMSFGCDLLNVTPKNIVSITEQCKFSFLFAPMCHPTLKNVAPIRKQLGLPTIFNLVGPLLNPIPTYARIIGVSKLSLGEVVAKTLLKLGAGRSLVVCGEEGLDEISPAGPTHTWLVRDGTITHEVYTPESFHLQSHPLSSVASGTPSANAILLEELLSNMLHANHPILDYVLMNTAALLHVAGMAESLREGVKIAQQSISSGAALRELSNFSTISQQP.

It belongs to the anthranilate phosphoribosyltransferase family.

It catalyses the reaction N-(5-phospho-beta-D-ribosyl)anthranilate + diphosphate = 5-phospho-alpha-D-ribose 1-diphosphate + anthranilate. The protein operates within amino-acid biosynthesis; L-tryptophan biosynthesis; L-tryptophan from chorismate: step 2/5. In Schizosaccharomyces pombe (strain 972 / ATCC 24843) (Fission yeast), this protein is Anthranilate phosphoribosyltransferase (trp4).